We begin with the raw amino-acid sequence, 151 residues long: 3-hydroxyacyl-[acyl-carrier-protein] dehydratase FabZ (151 aa).

Histidine 54 is an active-site residue.

Belongs to the thioester dehydratase family. FabZ subfamily.

The protein localises to the cytoplasm. The enzyme catalyses a (3R)-hydroxyacyl-[ACP] = a (2E)-enoyl-[ACP] + H2O. Its function is as follows. Involved in unsaturated fatty acids biosynthesis. Catalyzes the dehydration of short chain beta-hydroxyacyl-ACPs and long chain saturated and unsaturated beta-hydroxyacyl-ACPs. This chain is 3-hydroxyacyl-[acyl-carrier-protein] dehydratase FabZ, found in Buchnera aphidicola subsp. Acyrthosiphon pisum (strain 5A).